We begin with the raw amino-acid sequence, 210 residues long: S-norcoclaurine synthase (210 aa).

Residues Met1 to Cys19 form the signal peptide. Residue Tyr108 to Glu110 participates in dopamine binding. The active-site Proton donor is Lys122. Residue Asp141 coordinates (4-hydroxyphenyl)acetaldehyde.

This sequence belongs to the BetVI family. In terms of assembly, concentration-dependent dimerization, but mainly monomeric at concentrations around 10 uM. In terms of tissue distribution, expressed most abundantly in the rhizomes and to a lesser extent in petioles, roots, leaves and flower buds.

The enzyme catalyses (4-hydroxyphenyl)acetaldehyde + dopamine = (S)-norcoclaurine + H2O. In terms of biological role, involved in the biosynthesis of the common precursor of all benzylisoquinoline alkaloids such as morphine, sanguinarine, codeine or berberine. Condenses dopamine and 4-hydroxyphenylacetaldehyde. The protein is S-norcoclaurine synthase of Thalictrum flavum subsp. glaucum (Yellow meadow rue).